Reading from the N-terminus, the 64-residue chain is Beta-insect depressant toxin BmKIT4 (64 aa).

Positions 1–61 constitute an LCN-type CS-alpha/beta domain; it reads DGYIRGSNGC…TWKSESNTCG (61 aa). 4 disulfides stabilise this stretch: Cys10–Cys60, Cys14–Cys35, Cys21–Cys42, and Cys25–Cys44. Cys60 carries the cysteine amide modification.

It belongs to the long (4 C-C) scorpion toxin superfamily. Sodium channel inhibitor family. Beta subfamily. In terms of tissue distribution, expressed by the venom gland.

The protein resides in the secreted. Its function is as follows. Depressant insect beta-toxins cause a transient contraction paralysis followed by a slow flaccid paralysis. They bind voltage-independently at site-4 of sodium channels (Nav) and shift the voltage of activation toward more negative potentials thereby affecting sodium channel activation and promoting spontaneous and repetitive firing. This toxin is active only on insects. This is Beta-insect depressant toxin BmKIT4 from Olivierus martensii (Manchurian scorpion).